Reading from the N-terminus, the 207-residue chain is Protein lin-7 homolog B (207 aa).

The short motif at 1-13 (MAALVEPLGLERD) is the Kinase interacting site element. The 56-residue stretch at 10-65 (LERDVSRAVELLERLQRSGELPPQKLQALQRVLQSRFCSAIREVYEQLYDTLDITG) folds into the L27 domain. The region spanning 93-175 (VVELPKTDEG…SVKLVVRYTP (83 aa)) is the PDZ domain. Residues 187–207 (KMRSARRRQQHHSYTSLESRG) form a disordered region. A compositionally biased stretch (polar residues) spans 198–207 (HSYTSLESRG).

This sequence belongs to the lin-7 family. In terms of assembly, forms a complex with CASK and CASKIN1. Component of the brain-specific heterotrimeric complex (LIN-10-LIN-2-LIN-7 complex) composed of at least APBA1, CASK, and LIN7, which associates with the motor protein KIF17 to transport vesicles along microtubules. Forms a heterotrimeric complex composed of MMP5, LIN7B and PATJ; the N-terminal L27 domain of PALS1 interacts with the L27 domain of PATJ and the C-terminal L27 domain of PALS1 interacts with the L27 domain of LIN7B. Forms a heterotrimeric complex with DLG1 and CASK via their L27 domains. Interacts with DLG4 and GRIN2B as well as CDH1 and CTNNB1, the channels KCNJ12/Kir2.2, KCNJ4/Kir2.3 and probably KCNJ2/Kir2.1 and SLC6A12/BGT-1 via its PDZ domain. The association of LIN7A with cadherin and beta-catenin is calcium-dependent, occurs at synaptic junctions and requires the actin cytoskeleton. Interacts with EGFR, ERBB2, ERBB3 and ERBB4 with both PDZ and KID domains. Associates with KIF17 via APBA1. Interacts with ASIC3. Interacts with TOPK. Interacts with RTKN. Interacts with APBA1. Interacts with MPP7. Interacts with DLG2. Interacts with DLG3. In terms of tissue distribution, expressed in the kidney; predominantly in the vasa recta.

Its subcellular location is the cell membrane. The protein resides in the basolateral cell membrane. The protein localises to the cell junction. It localises to the postsynaptic density membrane. It is found in the tight junction. Its function is as follows. Plays a role in establishing and maintaining the asymmetric distribution of channels and receptors at the plasma membrane of polarized cells. Forms membrane-associated multiprotein complexes that may regulate delivery and recycling of proteins to the correct membrane domains. The tripartite complex composed of LIN7 (LIN7A, LIN7B or LIN7C), CASK and APBA1 associates with the motor protein KIF17 to transport vesicles containing N-methyl-D-aspartate (NMDA) receptor subunit NR2B along microtubules. This complex may have the potential to couple synaptic vesicle exocytosis to cell adhesion in brain. Ensures the proper localization of GRIN2B (subunit 2B of the NMDA receptor) to neuronal postsynaptic density and may function in localizing synaptic vesicles at synapses where it is recruited by beta-catenin and cadherin. Required to localize Kir2 channels, GABA transporter (SLC6A12) and EGFR/ERBB1, ERBB2, ERBB3 and ERBB4 to the basolateral membrane of epithelial cells. May increase the amplitude of ASIC3 acid-evoked currents by stabilizing the channel at the cell surface. The polypeptide is Protein lin-7 homolog B (Lin7b) (Mus musculus (Mouse)).